Consider the following 74-residue polypeptide: High-potential iron-sulfur protein (74 aa).

[4Fe-4S] cluster contacts are provided by cysteine 36, cysteine 39, cysteine 53, and cysteine 67.

It belongs to the high-potential iron-sulfur protein (HiPIP) family. As to quaternary structure, homodimer.

Specific class of high-redox-potential 4Fe-4S ferredoxins. Functions in anaerobic electron transport in most purple and in some other photosynthetic bacteria and in at least one genus (Paracoccus) of halophilic, denitrifying bacteria. The polypeptide is High-potential iron-sulfur protein (hip) (Rubrivivax gelatinosus (Rhodocyclus gelatinosus)).